The following is a 470-amino-acid chain: Choline/ethanolamine transporter flvcr2a (470 aa).

Residues 1–23 (MCDKADNHIDVQPEGNLEVSSVS) are Cytoplasmic-facing. A helical membrane pass occupies residues 24 to 48 (STRLYRRRWVILLLFSSYSLCNAFQ). Choline is bound by residues Asn45, Ala46, and Trp49. The Extracellular segment spans residues 49–66 (WIQYGIINNIFMKFYQVS). Residues 67–94 (SFAVDWLSMVYMLTYIPFIFPVTWLLER) form a helical membrane-spanning segment. The Cytoplasmic portion of the chain corresponds to 95-96 (KG). Residues 97 to 116 (LRVVALLAASINCAGTWIKV) traverse the membrane as a helical segment. Residues 117-123 (ASVQPSL) lie on the Extracellular side of the membrane. Residues 124–152 (FWVTMLGQFACSCAQVFILGMPSQVASVW) traverse the membrane as a helical segment. Choline contacts are provided by Gln138 and Leu142. The Cytoplasmic portion of the chain corresponds to 153-157 (FGSDE). A helical membrane pass occupies residues 158 to 183 (VSTACAIGVFGNQLGIAIGFLVPPVL). At 184-188 (VPNVE) the chain is on the extracellular side. A helical membrane pass occupies residues 189–218 (DMGELAEHISIMFYITAAVATLIFLLVVFV). Residues 219-254 (FQEKPETPPSLAQVALRNMPTGQHSYLASIARLMCN) lie on the Cytoplasmic side of the membrane. A helical transmembrane segment spans residues 255 to 285 (KPFILLLISYGLNVGSFYAVSTLLNRMIIEH). Tyr272 serves as a coordination point for choline. Over 286–289 (YPGE) the chain is Extracellular. The chain crosses the membrane as a helical span at residues 290–318 (EVNAGRIGLTLVVAGVVGSLICGVWLDKT). The Cytoplasmic segment spans residues 319–320 (KT). The chain crosses the membrane as a helical span at residues 321–343 (YKQTTLSVYLLSFVGMLIYSFTL). The Extracellular segment spans residues 344-346 (NLG). A helical transmembrane segment spans residues 347-376 (HLWLVFLTSGVLGFFMTGYLPLGFEFAVEL). At 377-384 (TYPESEGT) the chain is on the cytoplasmic side. Residues 385-410 (SSGLLNCSAQVFGIAFTIIQGKIIDH) form a helical membrane-spanning segment. A choline-binding site is contributed by Gln394. Topologically, residues 411–412 (FG) are extracellular. Residues 413 to 435 (TLAGNIFLCVFLLIGSIMTAFIK) traverse the membrane as a helical segment. Topologically, residues 436–470 (SDLRRQKANQETGGNADSSVHPQHGETLPVKEVKM) are cytoplasmic. Residues 445-456 (QETGGNADSSVH) are compositionally biased toward polar residues. The interval 445-470 (QETGGNADSSVHPQHGETLPVKEVKM) is disordered.

It belongs to the major facilitator superfamily. Feline leukemia virus subgroup C receptor (TC 2.A.1.28.1) family.

It localises to the cell membrane. Its subcellular location is the mitochondrion membrane. The protein resides in the endoplasmic reticulum membrane. The catalysed reaction is choline(out) = choline(in). The enzyme catalyses ethanolamine(in) = ethanolamine(out). It carries out the reaction heme b(in) = heme b(out). In terms of biological role, choline uniporter that specifically mediates choline uptake at the blood-brain-barrier. Responsible for the majority of choline uptake across the blood-brain-barrier from the circulation into the brain. Choline, a nutrient critical for brain development, is a precursor of phosphatidylcholine, as well as betaine. Also mediates transport of ethanolamine. Choline and ethanolamine transport is not coupled with proton transport and is exclusively driven by the choline gradient across the plasma membrane. Also acts as a heme b transporter. The protein is Choline/ethanolamine transporter flvcr2a of Danio rerio (Zebrafish).